Consider the following 119-residue polypeptide: Virulence protein VsdF (119 aa).

Expressed but non-essential protein, involved in the virulence of Salmonellas. This is Virulence protein VsdF (vsdF) from Salmonella dublin.